Consider the following 227-residue polypeptide: Small ribosomal subunit protein uS3 (227 aa).

The KH type-2 domain occupies 39-107 (VREFLMKKLE…PVHINIEEIR (69 aa)).

It belongs to the universal ribosomal protein uS3 family. As to quaternary structure, part of the 30S ribosomal subunit. Forms a tight complex with proteins S10 and S14.

Binds the lower part of the 30S subunit head. Binds mRNA in the 70S ribosome, positioning it for translation. This Hahella chejuensis (strain KCTC 2396) protein is Small ribosomal subunit protein uS3.